A 265-amino-acid polypeptide reads, in one-letter code: NAD kinase 1 (265 aa).

Aspartate 45 (proton acceptor) is an active-site residue. NAD(+) contacts are provided by residues aspartate 45–glycine 46, asparagine 122–glutamate 123, arginine 148, aspartate 150, and alanine 185.

Belongs to the NAD kinase family. Requires a divalent metal cation as cofactor.

Its subcellular location is the cytoplasm. The enzyme catalyses NAD(+) + ATP = ADP + NADP(+) + H(+). Involved in the regulation of the intracellular balance of NAD and NADP, and is a key enzyme in the biosynthesis of NADP. Catalyzes specifically the phosphorylation on 2'-hydroxyl of the adenosine moiety of NAD to yield NADP. In Bacillus cereus (strain ATCC 10987 / NRS 248), this protein is NAD kinase 1.